The sequence spans 493 residues: 3-ketoacyl-CoA synthase 16 (493 aa).

Residues Met1–Ala35 form the signal peptide. Residues Asn52–Thr74 form a helical membrane-spanning segment. The region spanning Tyr71–Phe366 is the FAE domain. Catalysis depends on residues Cys221, His300, His384, His388, His417, and Asn421.

This sequence belongs to the thiolase-like superfamily. Chalcone/stilbene synthases family. Expressed in siliques.

It localises to the membrane. It carries out the reaction a very-long-chain acyl-CoA + malonyl-CoA + H(+) = a very-long-chain 3-oxoacyl-CoA + CO2 + CoA. It functions in the pathway lipid metabolism; fatty acid biosynthesis. The chain is 3-ketoacyl-CoA synthase 16 from Arabidopsis thaliana (Mouse-ear cress).